A 112-amino-acid chain; its full sequence is Carboxysome shell protein CcmK4 (112 aa).

The BMC domain occupies 6–92 (AVGSIETIGF…PHENVVAVLP (87 aa)).

Belongs to the bacterial microcompartments protein family. CcmK subfamily. In terms of assembly, homohexamer. Interacts with full-length CcmM. Forms mixed heterohexamers with CcmK3, probably with 1:5 CcmK3:CcmK4 stoichiometry. Only very weak interactions with CcmK1 and CcmK2 were seen.

Its subcellular location is the carboxysome. In terms of biological role, a probably minor shell protein component of the carboxysome, a polyhedral inclusion where RuBisCO (ribulose bisphosphate carboxylase, rbcL-rbcS) is sequestered. The central pore probably regulates metabolite flux, as might the gaps between assembled homohexamers. Homohexamers make sheets that probably form the facets of the polyhedral carboxysome. This subunit probably makes both homohexamers and heterohexamers with CcmK3. This is Carboxysome shell protein CcmK4 from Synechocystis sp. (strain ATCC 27184 / PCC 6803 / Kazusa).